Here is a 124-residue protein sequence, read N- to C-terminus: Small ribosomal subunit protein uS12c (124 aa).

Disordered stretches follow at residues 1-28 (MPTI…KGCP) and 104-124 (ASGV…QPKT). Basic residues-rich tracts occupy residues 11 to 20 (ERHKSSKKTK) and 109 to 124 (DRKK…QPKT).

This sequence belongs to the universal ribosomal protein uS12 family. In terms of assembly, part of the 30S ribosomal subunit.

Its subcellular location is the plastid. It is found in the chloroplast. With S4 and S5 plays an important role in translational accuracy. Located at the interface of the 30S and 50S subunits. This is Small ribosomal subunit protein uS12c (rps12) from Gracilaria tenuistipitata var. liui (Red alga).